We begin with the raw amino-acid sequence, 168 residues long: MHIESKNRQIKKDIVVEITKKINDSQSLFLAEYRGLTVAKLLNLRKEAKKHNVEIKVYKNRLVKLATQKLGHSDLDKFLVGPNLFVFSNELGMDGAKVLAEFAKKNKKLVLKAGIFDGKVVDAAGVKAVAELPTYEEALTILASSLLGPLRQISLSFKLLVDENKLSN.

The protein belongs to the universal ribosomal protein uL10 family. Part of the ribosomal stalk of the 50S ribosomal subunit. The N-terminus interacts with L11 and the large rRNA to form the base of the stalk. The C-terminus forms an elongated spine to which L12 dimers bind in a sequential fashion forming a multimeric L10(L12)X complex.

Functionally, forms part of the ribosomal stalk, playing a central role in the interaction of the ribosome with GTP-bound translation factors. In Mycoplasmopsis pulmonis (strain UAB CTIP) (Mycoplasma pulmonis), this protein is Large ribosomal subunit protein uL10 (rplJ).